The chain runs to 286 residues: DegV domain-containing protein SPs1668 (286 aa).

The region spanning 3 to 282 is the DegV domain; sequence FTIMTDSTAD…PNTLAVFVIG (280 aa). Thr62 and Ser94 together coordinate hexadecanoate.

In terms of biological role, may bind long-chain fatty acids, such as palmitate, and may play a role in lipid transport or fatty acid metabolism. The sequence is that of DegV domain-containing protein SPs1668 from Streptococcus pyogenes serotype M3 (strain SSI-1).